Reading from the N-terminus, the 66-residue chain is Disk-determining factor A (66 aa).

Functionally, involved in cell-shape determination. Required for the formation of disks. This Haloferax volcanii (strain ATCC 29605 / DSM 3757 / JCM 8879 / NBRC 14742 / NCIMB 2012 / VKM B-1768 / DS2) (Halobacterium volcanii) protein is Disk-determining factor A.